The primary structure comprises 76 residues: RNA-binding protein KhpA (76 aa).

The 47-residue stretch at 30–76 (GEVLEVRVNPEDLGRVIGRSGRTAKALRTLVTALADGRRVRVDVVDD) folds into the KH domain.

Belongs to the KhpA RNA-binding protein family.

Its subcellular location is the cytoplasm. In terms of biological role, a probable RNA-binding protein. This is RNA-binding protein KhpA from Leifsonia xyli subsp. xyli (strain CTCB07).